The primary structure comprises 105 residues: MRRVRVGDEVIVTAGRSKGKQGKILRILGDERVIVQDVNMVKRHTRPNPTANKPGGIIEREASIHISNVMLYNPATEKGDRIGFRRLEDGRKVRYFKSNDEIIDV.

Belongs to the universal ribosomal protein uL24 family. In terms of assembly, part of the 50S ribosomal subunit.

One of two assembly initiator proteins, it binds directly to the 5'-end of the 23S rRNA, where it nucleates assembly of the 50S subunit. Its function is as follows. One of the proteins that surrounds the polypeptide exit tunnel on the outside of the subunit. This Nitrosococcus oceani (strain ATCC 19707 / BCRC 17464 / JCM 30415 / NCIMB 11848 / C-107) protein is Large ribosomal subunit protein uL24.